The sequence spans 285 residues: MANQKKKTLPPQHQNQQPGFEYLMDPRPVFDKPKKAKKLEGKTAIITGGDSGIGRAVSVLFAKEGANVVIVYLNEHQDAEETKQYVEKEGVKCLLIAGDVGDEAFCNDVVGQASQVFPSIDILVNNAAEQHVQPSIEKITSHQLIRTFQTNIFSMFYLTKAVLPHLKKGSSIINTASITAYKGNKTLIDYSATKGAIVTFTRSLSQSLVQQGIRVNAVAPGPIWTPLIPASFAAKDVEVFGSDVPMERPGQPVEVAPSYLYLASDDSTYVTGQTIHVNGGTIVNG.

Residues Met1–Asp25 are disordered. Ile45–Val69 is an NADP(+) binding site. Substrate is bound at residue Ser177. The Proton acceptor role is filled by Tyr190.

The protein belongs to the short-chain dehydrogenases/reductases (SDR) family.

This is an uncharacterized protein from Bacillus subtilis (strain 168).